Reading from the N-terminus, the 388-residue chain is Tryptophan synthase beta chain 1 (388 aa).

An N6-(pyridoxal phosphate)lysine modification is found at Lys82.

Belongs to the TrpB family. As to quaternary structure, tetramer of two alpha and two beta chains. Pyridoxal 5'-phosphate serves as cofactor.

The catalysed reaction is (1S,2R)-1-C-(indol-3-yl)glycerol 3-phosphate + L-serine = D-glyceraldehyde 3-phosphate + L-tryptophan + H2O. Its pathway is amino-acid biosynthesis; L-tryptophan biosynthesis; L-tryptophan from chorismate: step 5/5. The beta subunit is responsible for the synthesis of L-tryptophan from indole and L-serine. In Pyrococcus abyssi (strain GE5 / Orsay), this protein is Tryptophan synthase beta chain 1 (trpB1).